We begin with the raw amino-acid sequence, 213 residues long: Imidazole glycerol phosphate synthase subunit HisH (213 aa).

The Glutamine amidotransferase type-1 domain maps to 4–211 (NLGVIDYGMG…LHWLHQGAEP (208 aa)). The active-site Nucleophile is Cys-82. Active-site residues include His-186 and Glu-188.

As to quaternary structure, heterodimer of HisH and HisF.

It localises to the cytoplasm. It carries out the reaction 5-[(5-phospho-1-deoxy-D-ribulos-1-ylimino)methylamino]-1-(5-phospho-beta-D-ribosyl)imidazole-4-carboxamide + L-glutamine = D-erythro-1-(imidazol-4-yl)glycerol 3-phosphate + 5-amino-1-(5-phospho-beta-D-ribosyl)imidazole-4-carboxamide + L-glutamate + H(+). The enzyme catalyses L-glutamine + H2O = L-glutamate + NH4(+). Its pathway is amino-acid biosynthesis; L-histidine biosynthesis; L-histidine from 5-phospho-alpha-D-ribose 1-diphosphate: step 5/9. Its function is as follows. IGPS catalyzes the conversion of PRFAR and glutamine to IGP, AICAR and glutamate. The HisH subunit catalyzes the hydrolysis of glutamine to glutamate and ammonia as part of the synthesis of IGP and AICAR. The resulting ammonia molecule is channeled to the active site of HisF. The protein is Imidazole glycerol phosphate synthase subunit HisH of Synechococcus sp. (strain CC9902).